The primary structure comprises 188 residues: Sec-independent protein translocase protein TatB (188 aa).

The helical transmembrane segment at 1–21 (MFDIGWSELVVIGVVALVAIG) threads the bilayer. The segment at 147 to 188 (LPVPAETHALATTDLAPPDLAHPAPAHPEPTNSEPAKDAKAS) is disordered. The segment covering 160 to 170 (DLAPPDLAHPA) has biased composition (low complexity).

This sequence belongs to the TatB family. In terms of assembly, the Tat system comprises two distinct complexes: a TatABC complex, containing multiple copies of TatA, TatB and TatC subunits, and a separate TatA complex, containing only TatA subunits. Substrates initially bind to the TatABC complex, which probably triggers association of the separate TatA complex to form the active translocon.

The protein localises to the cell inner membrane. In terms of biological role, part of the twin-arginine translocation (Tat) system that transports large folded proteins containing a characteristic twin-arginine motif in their signal peptide across membranes. Together with TatC, TatB is part of a receptor directly interacting with Tat signal peptides. TatB may form an oligomeric binding site that transiently accommodates folded Tat precursor proteins before their translocation. The chain is Sec-independent protein translocase protein TatB from Rhodopseudomonas palustris (strain HaA2).